Here is a 207-residue protein sequence, read N- to C-terminus: Large ribosomal subunit protein uL4 (207 aa).

Residues 53–76 are disordered; the sequence is TVSEVSGTTKKPFKQKGTGNARQG.

The protein belongs to the universal ribosomal protein uL4 family. In terms of assembly, part of the 50S ribosomal subunit.

Functionally, one of the primary rRNA binding proteins, this protein initially binds near the 5'-end of the 23S rRNA. It is important during the early stages of 50S assembly. It makes multiple contacts with different domains of the 23S rRNA in the assembled 50S subunit and ribosome. Its function is as follows. Forms part of the polypeptide exit tunnel. The polypeptide is Large ribosomal subunit protein uL4 (Rickettsia bellii (strain OSU 85-389)).